The following is a 152-amino-acid chain: D-aminoacyl-tRNA deacylase (152 aa).

The Gly-cisPro motif, important for rejection of L-amino acids motif lies at 142-143; sequence GP.

It belongs to the DTD family. In terms of assembly, homodimer.

It localises to the cytoplasm. The catalysed reaction is glycyl-tRNA(Ala) + H2O = tRNA(Ala) + glycine + H(+). It carries out the reaction a D-aminoacyl-tRNA + H2O = a tRNA + a D-alpha-amino acid + H(+). Functionally, an aminoacyl-tRNA editing enzyme that deacylates mischarged D-aminoacyl-tRNAs. Also deacylates mischarged glycyl-tRNA(Ala), protecting cells against glycine mischarging by AlaRS. Acts via tRNA-based rather than protein-based catalysis; rejects L-amino acids rather than detecting D-amino acids in the active site. By recycling D-aminoacyl-tRNA to D-amino acids and free tRNA molecules, this enzyme counteracts the toxicity associated with the formation of D-aminoacyl-tRNA entities in vivo and helps enforce protein L-homochirality. The chain is D-aminoacyl-tRNA deacylase from Burkholderia cenocepacia (strain HI2424).